The primary structure comprises 273 residues: Formamidopyrimidine-DNA glycosylase (273 aa).

The Schiff-base intermediate with DNA role is filled by Pro2. The active-site Proton donor is the Glu3. Lys58 functions as the Proton donor; for beta-elimination activity in the catalytic mechanism. DNA is bound by residues His91 and Arg110. Residues Gln238–Lys272 form an FPG-type zinc finger. Arg262 acts as the Proton donor; for delta-elimination activity in catalysis.

It belongs to the FPG family. Monomer. The cofactor is Zn(2+).

It catalyses the reaction Hydrolysis of DNA containing ring-opened 7-methylguanine residues, releasing 2,6-diamino-4-hydroxy-5-(N-methyl)formamidopyrimidine.. The enzyme catalyses 2'-deoxyribonucleotide-(2'-deoxyribose 5'-phosphate)-2'-deoxyribonucleotide-DNA = a 3'-end 2'-deoxyribonucleotide-(2,3-dehydro-2,3-deoxyribose 5'-phosphate)-DNA + a 5'-end 5'-phospho-2'-deoxyribonucleoside-DNA + H(+). In terms of biological role, involved in base excision repair of DNA damaged by oxidation or by mutagenic agents. Acts as a DNA glycosylase that recognizes and removes damaged bases. Has a preference for oxidized purines, such as 7,8-dihydro-8-oxoguanine (8-oxoG). Has AP (apurinic/apyrimidinic) lyase activity and introduces nicks in the DNA strand. Cleaves the DNA backbone by beta-delta elimination to generate a single-strand break at the site of the removed base with both 3'- and 5'-phosphates. This Streptococcus mutans serotype c (strain ATCC 700610 / UA159) protein is Formamidopyrimidine-DNA glycosylase (mutM).